The following is a 147-amino-acid chain: SsrA-binding protein (147 aa).

Belongs to the SmpB family.

It is found in the cytoplasm. Functionally, required for rescue of stalled ribosomes mediated by trans-translation. Binds to transfer-messenger RNA (tmRNA), required for stable association of tmRNA with ribosomes. tmRNA and SmpB together mimic tRNA shape, replacing the anticodon stem-loop with SmpB. tmRNA is encoded by the ssrA gene; the 2 termini fold to resemble tRNA(Ala) and it encodes a 'tag peptide', a short internal open reading frame. During trans-translation Ala-aminoacylated tmRNA acts like a tRNA, entering the A-site of stalled ribosomes, displacing the stalled mRNA. The ribosome then switches to translate the ORF on the tmRNA; the nascent peptide is terminated with the 'tag peptide' encoded by the tmRNA and targeted for degradation. The ribosome is freed to recommence translation, which seems to be the essential function of trans-translation. This chain is SsrA-binding protein, found in Thermosipho melanesiensis (strain DSM 12029 / CIP 104789 / BI429).